The chain runs to 311 residues: NAD kinase (311 aa).

Residue Asp-88 is the Proton acceptor of the active site. NAD(+) contacts are provided by residues 88-89, 162-163, Arg-190, Asp-192, Val-200, and 203-208; these read DG, NE, and TAHNLS.

It belongs to the NAD kinase family. A divalent metal cation is required as a cofactor.

Its subcellular location is the cytoplasm. It carries out the reaction NAD(+) + ATP = ADP + NADP(+) + H(+). Involved in the regulation of the intracellular balance of NAD and NADP, and is a key enzyme in the biosynthesis of NADP. Catalyzes specifically the phosphorylation on 2'-hydroxyl of the adenosine moiety of NAD to yield NADP. This Rhodopirellula baltica (strain DSM 10527 / NCIMB 13988 / SH1) protein is NAD kinase.